The following is a 101-amino-acid chain: NAD(P)H-quinone oxidoreductase subunit 4L, chloroplastic (101 aa).

The next 3 helical transmembrane spans lie at 2–22 (ILEHVLVLSAYLFSIGIYGLI), 30–52 (ALMCLELLLNSVNLNFVTFSDFF), and 61–81 (IFSIFIIAIAAAEATIGLAIV).

Belongs to the complex I subunit 4L family. NDH is composed of at least 16 different subunits, 5 of which are encoded in the nucleus.

The protein resides in the plastid. The protein localises to the chloroplast thylakoid membrane. The enzyme catalyses a plastoquinone + NADH + (n+1) H(+)(in) = a plastoquinol + NAD(+) + n H(+)(out). It catalyses the reaction a plastoquinone + NADPH + (n+1) H(+)(in) = a plastoquinol + NADP(+) + n H(+)(out). Its function is as follows. NDH shuttles electrons from NAD(P)H:plastoquinone, via FMN and iron-sulfur (Fe-S) centers, to quinones in the photosynthetic chain and possibly in a chloroplast respiratory chain. The immediate electron acceptor for the enzyme in this species is believed to be plastoquinone. Couples the redox reaction to proton translocation, and thus conserves the redox energy in a proton gradient. This Oenothera glazioviana (Large-flowered evening primrose) protein is NAD(P)H-quinone oxidoreductase subunit 4L, chloroplastic.